Consider the following 460-residue polypeptide: 2-methylcitrate synthase, mitochondrial (460 aa).

Residues 1–24 constitute a mitochondrion transit peptide; the sequence is MALPLRTARHASRLAQTIGRRGYA. CoA is bound by residues Arg-69 and Lys-187. His-264 serves as a coordination point for oxaloacetate. Leu-299 provides a ligand contact to CoA. His-300 is an active-site residue. Residues Val-341, Gly-343, and Tyr-344 each contribute to the CoA site. Residues His-346 and Arg-355 each contribute to the oxaloacetate site. The active site involves His-346. CoA-binding residues include Thr-395, Lys-396, and Asn-401. Asp-403 is an active-site residue. 2 residues coordinate oxaloacetate: Arg-429 and Arg-449.

Belongs to the citrate synthase family. As to quaternary structure, homodimer.

It is found in the mitochondrion matrix. The enzyme catalyses propanoyl-CoA + oxaloacetate + H2O = (2S,3S)-2-methylcitrate + CoA + H(+). The catalysed reaction is oxaloacetate + acetyl-CoA + H2O = citrate + CoA + H(+). It participates in organic acid metabolism; propanoate degradation. Its activity is regulated as follows. Partially inhibited by ATP. In terms of biological role, catalyzes the synthesis of (2S,3S)-2-methylcitrate from propionyl-CoA and oxaloacetate and also from acetyl-CoA and oxaloacetate with a greater efficiency. Also has citrate synthase activity and can substitute for the loss of citA activity. The polypeptide is 2-methylcitrate synthase, mitochondrial (Emericella nidulans (strain FGSC A4 / ATCC 38163 / CBS 112.46 / NRRL 194 / M139) (Aspergillus nidulans)).